Here is a 92-residue protein sequence, read N- to C-terminus: Large ribosomal subunit protein eL43 (92 aa).

The segment at 39–60 (CDFCGKYGMKRQAVGIWCCKGC) adopts a C4-type zinc-finger fold.

Belongs to the eukaryotic ribosomal protein eL43 family.

This Ostreococcus tauri protein is Large ribosomal subunit protein eL43 (RPL37a).